The chain runs to 167 residues: 3-dehydroquinate dehydratase (167 aa).

Catalysis depends on Tyr22, which acts as the Proton acceptor. Residues Asn76, His82, and Asp89 each contribute to the substrate site. His102 functions as the Proton donor in the catalytic mechanism. Substrate contacts are provided by residues 103-104 (LT) and Arg113.

Belongs to the type-II 3-dehydroquinase family. In terms of assembly, homododecamer.

The enzyme catalyses 3-dehydroquinate = 3-dehydroshikimate + H2O. Its pathway is metabolic intermediate biosynthesis; chorismate biosynthesis; chorismate from D-erythrose 4-phosphate and phosphoenolpyruvate: step 3/7. Its function is as follows. Catalyzes a trans-dehydration via an enolate intermediate. The protein is 3-dehydroquinate dehydratase of Helicobacter pylori (strain P12).